A 163-amino-acid chain; its full sequence is Regulator of chromosome segregation (163 aa).

Interacts with CpsD and ParB.

Its subcellular location is the cytoplasm. It is found in the nucleoid. The protein localises to the cell membrane. Its function is as follows. Required for cell division and chromosome segregation. Binds to DNA and is involved in segregating the origin of replication (oriC) region to new daughter cells. When the nucleoid is not properly segregated, involved in blocking the cell division to protect the nucleoid against premature truncation by the newly forming septum, a function which is dependent on CpsD and its autophosphorylation level. The chain is Regulator of chromosome segregation from Streptococcus pneumoniae serotype 2 (strain D39 / NCTC 7466).